Reading from the N-terminus, the 421-residue chain is Gamma-glutamyl phosphate reductase (421 aa).

Belongs to the gamma-glutamyl phosphate reductase family.

Its subcellular location is the cytoplasm. It carries out the reaction L-glutamate 5-semialdehyde + phosphate + NADP(+) = L-glutamyl 5-phosphate + NADPH + H(+). Its pathway is amino-acid biosynthesis; L-proline biosynthesis; L-glutamate 5-semialdehyde from L-glutamate: step 2/2. Its function is as follows. Catalyzes the NADPH-dependent reduction of L-glutamate 5-phosphate into L-glutamate 5-semialdehyde and phosphate. The product spontaneously undergoes cyclization to form 1-pyrroline-5-carboxylate. This Shewanella pealeana (strain ATCC 700345 / ANG-SQ1) protein is Gamma-glutamyl phosphate reductase.